A 191-amino-acid chain; its full sequence is GTP-binding protein CIN4 (191 aa).

GTP-binding positions include 23–30 (GLDNSGKS), 69–73 (DIGGQ), and 131–134 (NKID).

Implicated in yeast microtubule function. The protein is GTP-binding protein CIN4 (CIN4) of Saccharomyces cerevisiae (strain ATCC 204508 / S288c) (Baker's yeast).